Consider the following 208-residue polypeptide: Octanoyltransferase (208 aa).

Residues 29-208 (KTQDELVWLL…KEFNKVFCNC (180 aa)) enclose the BPL/LPL catalytic domain. Residues 68–75 (RGGKYTYH), 140–142 (AFG), and 153–155 (GVS) contribute to the substrate site. C171 acts as the Acyl-thioester intermediate in catalysis.

It belongs to the LipB family.

The protein resides in the cytoplasm. The catalysed reaction is octanoyl-[ACP] + L-lysyl-[protein] = N(6)-octanoyl-L-lysyl-[protein] + holo-[ACP] + H(+). It participates in protein modification; protein lipoylation via endogenous pathway; protein N(6)-(lipoyl)lysine from octanoyl-[acyl-carrier-protein]: step 1/2. Functionally, catalyzes the transfer of endogenously produced octanoic acid from octanoyl-acyl-carrier-protein onto the lipoyl domains of lipoate-dependent enzymes. Lipoyl-ACP can also act as a substrate although octanoyl-ACP is likely to be the physiological substrate. The protein is Octanoyltransferase of Ehrlichia ruminantium (strain Gardel).